Here is a 776-residue protein sequence, read N- to C-terminus: Ribosomal RNA large subunit methyltransferase K/L (776 aa).

The THUMP domain maps to 68 to 183 (DLYKICLWSR…DKQAELYLDL (116 aa)).

The protein belongs to the methyltransferase superfamily. RlmKL family.

Its subcellular location is the cytoplasm. It carries out the reaction guanosine(2445) in 23S rRNA + S-adenosyl-L-methionine = N(2)-methylguanosine(2445) in 23S rRNA + S-adenosyl-L-homocysteine + H(+). It catalyses the reaction guanosine(2069) in 23S rRNA + S-adenosyl-L-methionine = N(2)-methylguanosine(2069) in 23S rRNA + S-adenosyl-L-homocysteine + H(+). Its function is as follows. Specifically methylates the guanine in position 2445 (m2G2445) and the guanine in position 2069 (m7G2069) of 23S rRNA. The polypeptide is Ribosomal RNA large subunit methyltransferase K/L (Psychrobacter cryohalolentis (strain ATCC BAA-1226 / DSM 17306 / VKM B-2378 / K5)).